Consider the following 377-residue polypeptide: Terpene synthase 1 (377 aa).

The DDxx(x)D/E motif motif lies at 81-86; it reads DDALDA. The NDxxSxxxD/E motif signature appears at 221 to 229; it reads NDLVSYEKE. Positions 326–359 are disordered; the sequence is RKQSSSPNLTNSISIPTNNTNNSNNITSSPNKKQ. Residues 335–356 are compositionally biased toward low complexity; the sequence is TNSISIPTNNTNNSNNITSSPN.

The protein belongs to the terpene synthase family.

The catalysed reaction is (2E,6E)-farnesyl diphosphate = (2S,3R,6S,9S)-(-)-protoillud-7-ene + diphosphate. Terpene synthase that converts its substrate farnesyl diphosphate (FPP) into the sesquiterpene protoillud-7-ene. The chain is Terpene synthase 1 from Dictyostelium purpureum (Slime mold).